The following is a 540-amino-acid chain: Chaperonin GroEL (540 aa).

ATP contacts are provided by residues 29 to 32 (TLGP), 86 to 90 (DGTTT), glycine 413, and aspartate 495.

Belongs to the chaperonin (HSP60) family. In terms of assembly, forms a cylinder of 14 subunits composed of two heptameric rings stacked back-to-back. Interacts with the co-chaperonin GroES.

The protein resides in the cytoplasm. It carries out the reaction ATP + H2O + a folded polypeptide = ADP + phosphate + an unfolded polypeptide.. Functionally, together with its co-chaperonin GroES, plays an essential role in assisting protein folding. The GroEL-GroES system forms a nano-cage that allows encapsulation of the non-native substrate proteins and provides a physical environment optimized to promote and accelerate protein folding. The polypeptide is Chaperonin GroEL (Caldanaerobacter subterraneus subsp. tengcongensis (strain DSM 15242 / JCM 11007 / NBRC 100824 / MB4) (Thermoanaerobacter tengcongensis)).